Consider the following 417-residue polypeptide: Mitochondrial tRNA-specific 2-thiouridylase 1 (417 aa).

Residues 32–39 (AMSSGVDS) and methionine 58 contribute to the ATP site. The interval 122–124 (NPD) is interaction with target base in tRNA. The active-site Nucleophile is the cysteine 127. Residues cysteine 127 and cysteine 229 are joined by a disulfide bond. Glycine 154 is a binding site for ATP. The segment at 179-181 (KDQ) is interaction with tRNA. The Cysteine persulfide intermediate role is filled by cysteine 229. The interaction with tRNA stretch occupies residues 354–355 (RS).

It belongs to the MnmA/TRMU family.

The protein resides in the mitochondrion. The catalysed reaction is 5-taurinomethyluridine(34) in tRNA + S-sulfanyl-L-cysteinyl-[protein] + AH2 + ATP = 5-taurinomethyl-2-thiouridine(34) in tRNA + L-cysteinyl-[protein] + A + AMP + diphosphate + H(+). Functionally, catalyzes the 2-thiolation of uridine at the wobble position (U34) of mitochondrial tRNA(Lys), tRNA(Glu) and tRNA(Gln). Required for the formation of 5-taurinomethyl-2-thiouridine (tm5s2U) of mitochondrial tRNA(Lys), tRNA(Glu), and tRNA(Gln) at the wobble position. ATP is required to activate the C2 atom of the wobble base. The polypeptide is Mitochondrial tRNA-specific 2-thiouridylase 1 (SLM3) (Saccharomyces cerevisiae (strain ATCC 204508 / S288c) (Baker's yeast)).